We begin with the raw amino-acid sequence, 245 residues long: tRNA pseudouridine synthase A (245 aa).

Catalysis depends on aspartate 52, which acts as the Nucleophile. Tyrosine 111 provides a ligand contact to substrate.

The protein belongs to the tRNA pseudouridine synthase TruA family. As to quaternary structure, homodimer.

The catalysed reaction is uridine(38/39/40) in tRNA = pseudouridine(38/39/40) in tRNA. Formation of pseudouridine at positions 38, 39 and 40 in the anticodon stem and loop of transfer RNAs. This chain is tRNA pseudouridine synthase A, found in Rickettsia canadensis (strain McKiel).